Here is a 115-residue protein sequence, read N- to C-terminus: Superoxide reductase (115 aa).

Fe cation is bound by residues glutamate 14, histidine 16, histidine 41, histidine 47, cysteine 102, and histidine 105.

It belongs to the desulfoferrodoxin family. Homotetramer. The cofactor is Fe cation.

The catalysed reaction is reduced [rubredoxin] + superoxide + 2 H(+) = oxidized [rubredoxin] + H2O2. Its function is as follows. Uses electrons from reduced NADP, by way of rubredoxin and an oxidoreductase, to catalyze the reduction of superoxide to hydrogen peroxide. In Thermococcus kodakarensis (strain ATCC BAA-918 / JCM 12380 / KOD1) (Pyrococcus kodakaraensis (strain KOD1)), this protein is Superoxide reductase (sorA).